Reading from the N-terminus, the 121-residue chain is Small ribosomal subunit protein uS13 (121 aa).

The interval P96–K121 is disordered. The segment covering A106–K121 has biased composition (basic residues).

The protein belongs to the universal ribosomal protein uS13 family. As to quaternary structure, part of the 30S ribosomal subunit. Forms a loose heterodimer with protein S19. Forms two bridges to the 50S subunit in the 70S ribosome.

In terms of biological role, located at the top of the head of the 30S subunit, it contacts several helices of the 16S rRNA. In the 70S ribosome it contacts the 23S rRNA (bridge B1a) and protein L5 of the 50S subunit (bridge B1b), connecting the 2 subunits; these bridges are implicated in subunit movement. Contacts the tRNAs in the A and P-sites. The polypeptide is Small ribosomal subunit protein uS13 (Streptococcus suis (strain 05ZYH33)).